The primary structure comprises 304 residues: Oxygen-dependent coproporphyrinogen-III oxidase (304 aa).

Serine 94 contacts substrate. Residues histidine 98 and histidine 108 each contribute to the a divalent metal cation site. Histidine 108 acts as the Proton donor in catalysis. 110–112 provides a ligand contact to substrate; sequence NVR. Positions 147 and 177 each coordinate a divalent metal cation. The interval 242-277 is important for dimerization; that stretch reads YVEFNLVYDRGTLFGLQTGGRTESILMSMPPLVRWE. Residue 260–262 coordinates substrate; that stretch reads GGR.

It belongs to the aerobic coproporphyrinogen-III oxidase family. Homodimer. It depends on a divalent metal cation as a cofactor.

It is found in the cytoplasm. The catalysed reaction is coproporphyrinogen III + O2 + 2 H(+) = protoporphyrinogen IX + 2 CO2 + 2 H2O. It participates in porphyrin-containing compound metabolism; protoporphyrin-IX biosynthesis; protoporphyrinogen-IX from coproporphyrinogen-III (O2 route): step 1/1. Its function is as follows. Involved in the heme biosynthesis. Catalyzes the aerobic oxidative decarboxylation of propionate groups of rings A and B of coproporphyrinogen-III to yield the vinyl groups in protoporphyrinogen-IX. This chain is Oxygen-dependent coproporphyrinogen-III oxidase, found in Shewanella halifaxensis (strain HAW-EB4).